Reading from the N-terminus, the 146-residue chain is uncharacterized protein (146 aa).

The Toprim domain maps to 31–119 (EKVMIVEGKS…RAYKEVAAAP (89 aa)).

This is an uncharacterized protein from Bacillus subtilis (strain 168).